Consider the following 414-residue polypeptide: Signal recognition particle receptor FtsY (414 aa).

GTP-binding positions include 216–223 (GVNGVGKT), 298–302 (DTAGR), and 362–365 (TKLD).

It belongs to the GTP-binding SRP family. FtsY subfamily. As to quaternary structure, part of the signal recognition particle protein translocation system, which is composed of SRP and FtsY. SRP is a ribonucleoprotein composed of Ffh and a 4.5S RNA molecule.

The protein resides in the cell inner membrane. Its subcellular location is the cytoplasm. The enzyme catalyses GTP + H2O = GDP + phosphate + H(+). In terms of biological role, involved in targeting and insertion of nascent membrane proteins into the cytoplasmic membrane. Acts as a receptor for the complex formed by the signal recognition particle (SRP) and the ribosome-nascent chain (RNC). Interaction with SRP-RNC leads to the transfer of the RNC complex to the Sec translocase for insertion into the membrane, the hydrolysis of GTP by both Ffh and FtsY, and the dissociation of the SRP-FtsY complex into the individual components. This Haemophilus influenzae (strain ATCC 51907 / DSM 11121 / KW20 / Rd) protein is Signal recognition particle receptor FtsY.